A 368-amino-acid polypeptide reads, in one-letter code: Putative agmatine deiminase (368 aa).

Residue cysteine 359 is the Amidino-cysteine intermediate of the active site.

The protein belongs to the agmatine deiminase family.

The catalysed reaction is agmatine + H2O = N-carbamoylputrescine + NH4(+). The sequence is that of Putative agmatine deiminase from Pectobacterium atrosepticum (strain SCRI 1043 / ATCC BAA-672) (Erwinia carotovora subsp. atroseptica).